A 477-amino-acid chain; its full sequence is S-triazine hydrolase (477 aa).

Low complexity-rich tracts occupy residues 38-73 (SPTT…KSSS) and 120-132 (PLSS…DPTT). Disordered regions lie at residues 38–77 (SPTT…GVVH) and 120–143 (PLSS…GSPF).

Belongs to the metallo-dependent hydrolases superfamily. ATZ/TRZ family.

It functions in the pathway xenobiotic degradation; melamine degradation. Hydrolytic deamination of the S-triazine substrate melamine. This chain is S-triazine hydrolase (trzA), found in Gordonia rubripertincta (Rhodococcus corallinus).